We begin with the raw amino-acid sequence, 218 residues long: Tegument protein UL51 homolog (218 aa).

Cys-11 is lipidated: S-palmitoyl cysteine; by host. The disordered stretch occupies residues Ala-199 to Thr-218.

This sequence belongs to the herpesviridae UL51 family. Homodimer. Interacts with BBRF2; the BBRF2-BSRF1 complexes oligomerize which might play a role in tethering the viral nucleocapsids to the host Golgi membrane during secondary envelopment. Interacts with BGLF3.5. Interacts with BALF1. Interacts with glycoprotein gB. Interacts with glycoprotein heterodimer gH/gL. In terms of processing, phosphorylated. Post-translationally, palmitoylation is necessary for Golgi localization.

It is found in the host cytoplasm. The protein resides in the virion. Its subcellular location is the host Golgi apparatus. In terms of biological role, plays several roles during the time course of infection, including egress of virus particles from the perinuclear space and secondary envelopment of cytoplasmic capsids that bud into specific trans-Golgi network (TGN)-derived membranes. The polypeptide is Tegument protein UL51 homolog (Homo sapiens (Human)).